The following is an 85-amino-acid chain: Large ribosomal subunit protein bL27 (85 aa).

The protein belongs to the bacterial ribosomal protein bL27 family.

This chain is Large ribosomal subunit protein bL27, found in Solibacter usitatus (strain Ellin6076).